Reading from the N-terminus, the 122-residue chain is Large ribosomal subunit protein uL14 (122 aa).

The protein belongs to the universal ribosomal protein uL14 family. Part of the 50S ribosomal subunit. Forms a cluster with proteins L3 and L19. In the 70S ribosome, L14 and L19 interact and together make contacts with the 16S rRNA in bridges B5 and B8.

In terms of biological role, binds to 23S rRNA. Forms part of two intersubunit bridges in the 70S ribosome. The protein is Large ribosomal subunit protein uL14 of Halorhodospira halophila (strain DSM 244 / SL1) (Ectothiorhodospira halophila (strain DSM 244 / SL1)).